Here is a 342-residue protein sequence, read N- to C-terminus: tRNA N6-adenosine threonylcarbamoyltransferase (342 aa).

Positions 114 and 118 each coordinate Fe cation. Residues 136–140 (LVSGG), Asp169, Gly182, Asp186, and Asn275 contribute to the substrate site. Asp301 lines the Fe cation pocket.

This sequence belongs to the KAE1 / TsaD family. Requires Fe(2+) as cofactor.

The protein localises to the cytoplasm. The catalysed reaction is L-threonylcarbamoyladenylate + adenosine(37) in tRNA = N(6)-L-threonylcarbamoyladenosine(37) in tRNA + AMP + H(+). In terms of biological role, required for the formation of a threonylcarbamoyl group on adenosine at position 37 (t(6)A37) in tRNAs that read codons beginning with adenine. Is involved in the transfer of the threonylcarbamoyl moiety of threonylcarbamoyl-AMP (TC-AMP) to the N6 group of A37, together with TsaE and TsaB. TsaD likely plays a direct catalytic role in this reaction. This chain is tRNA N6-adenosine threonylcarbamoyltransferase, found in Streptococcus pyogenes serotype M2 (strain MGAS10270).